The following is a 392-amino-acid chain: ACDNPEKFQYVEKSLSCAPRCSPGVDVYWSREDKDFAFVWMAVWSTLCFVSTAFTVLTFLLDPHRFQYPERPIIFLSMCYNVYSVAFIIRSVAGAETIACDRENGELYIIQEGLESTGCTIVFLILYYFGMASSLWWVVLTLTWFLAAGKKWGHEAIEAHSSYFHMAAWGIPAMKTIVILTMRKVAGDELTGLCYVGSMDVSALTGFVLIPLSCYLVVGTSFILTGFVALFHIRKIMKTGGTNTEKLEKLMVKIGVFSILYTVPATCVIVCYFYERLNVDYWNLRALERACVPLPGRRAADCSLEASVPTVAVFMLKIFMSLVVGITSGVWVWSSKTLQTWQSLCNRKLGVRTRGKPCSGVSCGGVHCHYKAPTVMLHMTKTDPYLDNPTHV.

Topologically, residues 1 to 35 (ACDNPEKFQYVEKSLSCAPRCSPGVDVYWSREDKD) are extracellular. The chain crosses the membrane as a helical span at residues 36–56 (FAFVWMAVWSTLCFVSTAFTV). The Cytoplasmic portion of the chain corresponds to 57–72 (LTFLLDPHRFQYPERP). Residues 73–93 (IIFLSMCYNVYSVAFIIRSVA) form a helical membrane-spanning segment. The Extracellular portion of the chain corresponds to 94-119 (GAETIACDRENGELYIIQEGLESTGC). The helical transmembrane segment at 120 to 140 (TIVFLILYYFGMASSLWWVVL) threads the bilayer. Residues 141-161 (TLTWFLAAGKKWGHEAIEAHS) are Cytoplasmic-facing. The helical transmembrane segment at 162–182 (SYFHMAAWGIPAMKTIVILTM) threads the bilayer. Residues 183-206 (RKVAGDELTGLCYVGSMDVSALTG) are Extracellular-facing. A helical membrane pass occupies residues 207-227 (FVLIPLSCYLVVGTSFILTGF). Residues 228–253 (VALFHIRKIMKTGGTNTEKLEKLMVK) are Cytoplasmic-facing. A helical transmembrane segment spans residues 254 to 274 (IGVFSILYTVPATCVIVCYFY). Residues 275 to 312 (ERLNVDYWNLRALERACVPLPGRRAADCSLEASVPTVA) are Extracellular-facing. Residues 313 to 333 (VFMLKIFMSLVVGITSGVWVW) form a helical membrane-spanning segment. Residues 334-392 (SSKTLQTWQSLCNRKLGVRTRGKPCSGVSCGGVHCHYKAPTVMLHMTKTDPYLDNPTHV) lie on the Cytoplasmic side of the membrane. The Lys-Thr-X-X-X-Trp motif, mediates interaction with the PDZ domain of Dvl family members motif lies at 336–341 (KTLQTW). The PDZ-binding motif lies at 390–392 (THV).

Belongs to the G-protein coupled receptor Fz/Smo family.

The protein resides in the cell membrane. Receptor for WNT2 that is coupled to the beta-catenin canonical signaling pathway, which leads to the activation of disheveled proteins, inhibition of GSK-3 kinase, nuclear accumulation of beta-catenin and activation of Wnt target genes. The polypeptide is Frizzled-9 (FZD9) (Gallus gallus (Chicken)).